A 253-amino-acid polypeptide reads, in one-letter code: Chitooligosaccharide deacetylase (253 aa).

Mg(2+) is bound by residues histidine 61 and histidine 126.

The protein belongs to the YdjC deacetylase family. ChbG subfamily. Homodimer. Requires Mg(2+) as cofactor.

It localises to the cytoplasm. The enzyme catalyses N,N'-diacetylchitobiose + H2O = N-acetyl-beta-D-glucosaminyl-(1-&gt;4)-D-glucosamine + acetate. It carries out the reaction diacetylchitobiose-6'-phosphate + H2O = N'-monoacetylchitobiose-6'-phosphate + acetate. It participates in glycan degradation; chitin degradation. Its function is as follows. Involved in the degradation of chitin. ChbG is essential for growth on the acetylated chitooligosaccharides chitobiose and chitotriose but is dispensable for growth on cellobiose and chitosan dimer, the deacetylated form of chitobiose. Deacetylation of chitobiose-6-P and chitotriose-6-P is necessary for both the activation of the chb promoter by the regulatory protein ChbR and the hydrolysis of phosphorylated beta-glucosides by the phospho-beta-glucosidase ChbF. Catalyzes the removal of only one acetyl group from chitobiose-6-P to yield monoacetylchitobiose-6-P, the inducer of ChbR and the substrate of ChbF. The polypeptide is Chitooligosaccharide deacetylase (Serratia marcescens).